The sequence spans 357 residues: tRNA N6-adenosine threonylcarbamoyltransferase (357 aa).

Residues His-116 and His-120 each coordinate Fe cation. Residues 139–143 (LVSGG), Asp-172, Gly-185, and Asn-284 each bind substrate. Asp-312 is a binding site for Fe cation.

The protein belongs to the KAE1 / TsaD family. Fe(2+) serves as cofactor.

Its subcellular location is the cytoplasm. It carries out the reaction L-threonylcarbamoyladenylate + adenosine(37) in tRNA = N(6)-L-threonylcarbamoyladenosine(37) in tRNA + AMP + H(+). Its function is as follows. Required for the formation of a threonylcarbamoyl group on adenosine at position 37 (t(6)A37) in tRNAs that read codons beginning with adenine. Is involved in the transfer of the threonylcarbamoyl moiety of threonylcarbamoyl-AMP (TC-AMP) to the N6 group of A37, together with TsaE and TsaB. TsaD likely plays a direct catalytic role in this reaction. This Synechococcus sp. (strain CC9902) protein is tRNA N6-adenosine threonylcarbamoyltransferase.